The sequence spans 329 residues: Protein mlo2 (329 aa).

Residues 33-104 (DTCTYSMGYL…HSIPCNLRKS (72 aa)) form a UBR-type zinc finger. The PHD-type zinc finger occupies 120 to 179 (GRFCICDTVYNPETEEGTMFQCILCEDWFHEKCLQKTNKGIAIPDAETFEWLVCSECSEK).

The protein belongs to the UBR7 family.

Its function is as follows. Not known, interfere with mitotic chromosome segregation when overexpressed. The sequence is that of Protein mlo2 (mlo2) from Schizosaccharomyces pombe (strain 972 / ATCC 24843) (Fission yeast).